We begin with the raw amino-acid sequence, 179 residues long: UPF0227 protein VP0969 (179 aa).

This sequence belongs to the UPF0227 family.

The polypeptide is UPF0227 protein VP0969 (Vibrio parahaemolyticus serotype O3:K6 (strain RIMD 2210633)).